A 424-amino-acid chain; its full sequence is UDP-N-acetylglucosamine 1-carboxyvinyltransferase 3 (424 aa).

22–23 (KN) contacts phosphoenolpyruvate. Residue Arg-94 participates in UDP-N-acetyl-alpha-D-glucosamine binding. The active-site Proton donor is Asp-118. Residues 123 to 127 (RPVDQ), Asp-306, and Leu-328 contribute to the UDP-N-acetyl-alpha-D-glucosamine site.

Belongs to the EPSP synthase family. MurA subfamily.

It localises to the cytoplasm. The catalysed reaction is phosphoenolpyruvate + UDP-N-acetyl-alpha-D-glucosamine = UDP-N-acetyl-3-O-(1-carboxyvinyl)-alpha-D-glucosamine + phosphate. The protein operates within cell wall biogenesis; peptidoglycan biosynthesis. Cell wall formation. Adds enolpyruvyl to UDP-N-acetylglucosamine. This is UDP-N-acetylglucosamine 1-carboxyvinyltransferase 3 from Symbiobacterium thermophilum (strain DSM 24528 / JCM 14929 / IAM 14863 / T).